The following is a 309-amino-acid chain: Ribosomal RNA small subunit methyltransferase H (309 aa).

S-adenosyl-L-methionine-binding positions include 33 to 35, Asp53, Phe79, Asp100, and Gln107; that span reads GGH.

It belongs to the methyltransferase superfamily. RsmH family.

It localises to the cytoplasm. The catalysed reaction is cytidine(1402) in 16S rRNA + S-adenosyl-L-methionine = N(4)-methylcytidine(1402) in 16S rRNA + S-adenosyl-L-homocysteine + H(+). Functionally, specifically methylates the N4 position of cytidine in position 1402 (C1402) of 16S rRNA. This chain is Ribosomal RNA small subunit methyltransferase H, found in Clostridium botulinum (strain 657 / Type Ba4).